The chain runs to 199 residues: Ribosome maturation factor RimP (199 aa).

A disordered region spans residues 165–199; sequence AGNLPPQPEDDEDMLADFEIDESEDEEDPETGDVQ. A compositionally biased stretch (acidic residues) spans 172 to 199; the sequence is PEDDEDMLADFEIDESEDEEDPETGDVQ.

It belongs to the RimP family.

Its subcellular location is the cytoplasm. In terms of biological role, required for maturation of 30S ribosomal subunits. This is Ribosome maturation factor RimP from Hyphomonas neptunium (strain ATCC 15444).